The following is a 919-amino-acid chain: Glutamate receptor ionotropic, kainate 3 (919 aa).

Positions M1–G31 are cleaved as a signal peptide. At M32–P563 the chain is on the extracellular side. Residues N70, N76, N278, N381, N415, N426, and N433 are each glycosylated (N-linked (GlcNAc...) asparagine). A disulfide bridge connects residues C99 and C350. The L-glutamate site is built by P518, T520, and R525. N548 and N551 each carry an N-linked (GlcNAc...) asparagine glycan. Residues D564–A584 form a helical membrane-spanning segment. Over R585–R636 the chain is Cytoplasmic. Residues I637–L657 form a helical membrane-spanning segment. Over A658 to K820 the chain is Extracellular. 3 residues coordinate L-glutamate: A691, T692, and E739. N-linked (GlcNAc...) asparagine glycosylation is present at N752. Residues I821–G841 form a helical membrane-spanning segment. The Cytoplasmic segment spans residues E842–P919. S869 bears the Phosphoserine mark. K887 is covalently cross-linked (Glycyl lysine isopeptide (Lys-Gly) (interchain with G-Cter in SUMO1)).

Belongs to the glutamate-gated ion channel (TC 1.A.10.1) family. GRIK3 subfamily. Homotetramer, and heterotetramer with GRIK4 or GRIK5. Can form functional heteromeric receptors with GRIK2. Interacts with PRKCABP. Interacts with NETO2. In terms of assembly, homomeric GluR7A forms functional kainate receptors which have very low sensitivity to glutamate. Can form functional heteromeric receptors with GRIK4 and GRIK5. As to quaternary structure, homomeric GluR7B forms functional kainate receptors. Mass spectrometry data suggest the protein is N-glycosylated at five distinct sites. Expressed in the olfactory bulb (at protein level). Expressed in the deep cortical layers, dentate gyrus, reticular thalamic nucleus, mammillary bodies, pons, and cerebellum of the adult.

Its subcellular location is the cell membrane. The protein resides in the postsynaptic cell membrane. The enzyme catalyses Ca(2+)(in) = Ca(2+)(out). Its function is as follows. Ionotropic glutamate receptor that functions as a cation-permeable ligand-gated ion channel, gated by L-glutamate and the glutamatergic agonist kainic acid. Binding of the excitatory neurotransmitter L-glutamate induces a conformation change, leading to the opening of the cation channel, and thereby converts the chemical signal to an electrical impulse. The receptor then desensitizes rapidly and enters a transient inactive state, characterized by the presence of bound agonist. In association with GRIK2, involved in presynaptic facilitation of glutamate release at hippocampal mossy fiber synapses. Functionally, ionotropic glutamate receptor that functions as a ligand-gated cation channel, gated by L-glutamate and the glutamatergic agonist kainic acid. The sequence is that of Glutamate receptor ionotropic, kainate 3 (Grik3) from Rattus norvegicus (Rat).